The chain runs to 339 residues: Uroporphyrinogen decarboxylase (339 aa).

Substrate contacts are provided by residues 23-27 (RQAGR), Asp72, Tyr147, Thr202, and His315.

The protein belongs to the uroporphyrinogen decarboxylase family. As to quaternary structure, homodimer.

The protein resides in the cytoplasm. It catalyses the reaction uroporphyrinogen III + 4 H(+) = coproporphyrinogen III + 4 CO2. It participates in porphyrin-containing compound metabolism; protoporphyrin-IX biosynthesis; coproporphyrinogen-III from 5-aminolevulinate: step 4/4. In terms of biological role, catalyzes the decarboxylation of four acetate groups of uroporphyrinogen-III to yield coproporphyrinogen-III. The polypeptide is Uroporphyrinogen decarboxylase (Geotalea daltonii (strain DSM 22248 / JCM 15807 / FRC-32) (Geobacter daltonii)).